Here is a 900-residue protein sequence, read N- to C-terminus: Chaperone protein ClpB 2 (900 aa).

The region spanning 15–154 is the Clp R domain; it reads PDRFSDPAWE…ESLLRQPSVS (140 aa). Repeat stretches follow at residues 18 to 81 and 91 to 154; these read FSDP…LADQ and IGED…PSVS. The disordered stretch occupies residues 151 to 183; that stretch reads PSVSPAPAPPPVPTAASAPAPTPRSAPAPRVMA. The segment covering 154-163 has biased composition (pro residues); the sequence is SPAPAPPPVP. An NBD1 region spans residues 191–376; the sequence is ELEREPSALE…RRFQQVLIRE (186 aa). Residue 244-251 participates in ATP binding; the sequence is GEPGVGKT. A linker region spans residues 377-581; that stretch reads PDLELSLEIL…IADLVARWTG (205 aa). The stretch at 427 to 557 forms a coiled coil; it reads IDLIDEAAAQ…LEASQAEAQS (131 aa). Residues 591 to 803 are NBD2; it reads ERRKLLALES…RIDEVIRFRP (213 aa). Residue 641-648 participates in ATP binding; that stretch reads GPTGVGKT. A C-terminal region spans residues 804–900; the sequence is LKVKDLVRIV…GASLEFEPLE (97 aa).

This sequence belongs to the ClpA/ClpB family. As to quaternary structure, homohexamer. The oligomerization is ATP-dependent.

The protein resides in the cytoplasm. Functionally, part of a stress-induced multi-chaperone system, it is involved in the recovery of the cell from heat-induced damage, in cooperation with DnaK, DnaJ and GrpE. Acts before DnaK, in the processing of protein aggregates. Protein binding stimulates the ATPase activity; ATP hydrolysis unfolds the denatured protein aggregates, which probably helps expose new hydrophobic binding sites on the surface of ClpB-bound aggregates, contributing to the solubilization and refolding of denatured protein aggregates by DnaK. The polypeptide is Chaperone protein ClpB 2 (clpB2) (Parasynechococcus marenigrum (strain WH8102)).